The following is a 491-amino-acid chain: Monothiol glutaredoxin-S11 (491 aa).

Glutaredoxin domains lie at 151-253, 287-389, and 394-491; these read NKRL…NIPL, KERL…GIVA, and EDRL…TLSE. Residue lysine 411 coordinates glutathione. Cysteine 419 contacts [2Fe-2S] cluster. Residues arginine 448, phenylalanine 460, and 473-474 each bind glutathione; that span reads CD.

This sequence belongs to the glutaredoxin family. CGFS subfamily.

It is found in the cytoplasm. Its function is as follows. May only reduce GSH-thiol disulfides, but not protein disulfides. In Oryza sativa subsp. japonica (Rice), this protein is Monothiol glutaredoxin-S11 (GRXS11).